Here is a 198-residue protein sequence, read N- to C-terminus: dITP/XTP pyrophosphatase (198 aa).

7–12 (THNPHK) provides a ligand contact to substrate. Positions 40 and 69 each coordinate Mg(2+). Aspartate 69 acts as the Proton acceptor in catalysis. Residues threonine 70, 151 to 154 (FGYD), lysine 174, and 179 to 180 (HR) contribute to the substrate site.

Belongs to the HAM1 NTPase family. Homodimer. It depends on Mg(2+) as a cofactor.

The catalysed reaction is XTP + H2O = XMP + diphosphate + H(+). The enzyme catalyses dITP + H2O = dIMP + diphosphate + H(+). It catalyses the reaction ITP + H2O = IMP + diphosphate + H(+). Its function is as follows. Pyrophosphatase that catalyzes the hydrolysis of nucleoside triphosphates to their monophosphate derivatives, with a high preference for the non-canonical purine nucleotides XTP (xanthosine triphosphate), dITP (deoxyinosine triphosphate) and ITP. Seems to function as a house-cleaning enzyme that removes non-canonical purine nucleotides from the nucleotide pool, thus preventing their incorporation into DNA/RNA and avoiding chromosomal lesions. This chain is dITP/XTP pyrophosphatase, found in Thermoanaerobacter pseudethanolicus (strain ATCC 33223 / 39E) (Clostridium thermohydrosulfuricum).